The following is a 183-amino-acid chain: Dual-action ribosomal maturation protein DarP (183 aa).

This sequence belongs to the DarP family.

The protein localises to the cytoplasm. Member of a network of 50S ribosomal subunit biogenesis factors which assembles along the 30S-50S interface, preventing incorrect 23S rRNA structures from forming. Promotes peptidyl transferase center (PTC) maturation. The polypeptide is Dual-action ribosomal maturation protein DarP (Shigella flexneri serotype 5b (strain 8401)).